The primary structure comprises 81 residues: Centromere protein X (81 aa).

An N-acetylmethionine modification is found at Met-1.

This sequence belongs to the CENP-X/MHF2 family. Heterodimer with CENPX, sometimes called MHF; this interaction stabilizes both partners. MHF heterodimers can assemble to form tetrameric structures. MHF also coassemble with CENPT-CENPW heterodimers at centromeres to form the tetrameric CENP-T-W-S-X complex. Forms a discrete complex with FANCM and CENPX, called FANCM-MHF; this interaction, probably mediated by direct binding between CENPS and FANCM, leads to synergistic activation of double-stranded DNA binding and strongly stimulates FANCM-mediated DNA remodeling. Recruited by FANCM to the Fanconi anemia (FA) core complex, which consists of CENPS, CENPX, FANCA, FANCB, FANCC, FANCE, FANCF, FANCG, FANCL, FANCM, FAAP24 and FAAP100. The FA core complex associates with Bloom syndrome (BLM) complex, which consists of at least BLM, DNA topoisomerase 3-alpha (TOP3A), RMI1/BLAP75, RPA1/RPA70 and RPA2/RPA32. The super complex between FA and BLM is called BRAFT.

Its subcellular location is the nucleus. The protein localises to the chromosome. It is found in the centromere. It localises to the kinetochore. DNA-binding component of the Fanconi anemia (FA) core complex. Required for the normal activation of the FA pathway, leading to monoubiquitination of the FANCI-FANCD2 complex in response to DNA damage, cellular resistance to DNA cross-linking drugs, and prevention of chromosomal breakage. In complex with CENPS (MHF heterodimer), crucial cofactor for FANCM in both binding and ATP-dependent remodeling of DNA. Stabilizes FANCM. In complex with CENPS and FANCM (but not other FANC proteins), rapidly recruited to blocked forks and promotes gene conversion at blocked replication forks. In complex with CENPS, CENPT and CENPW (CENP-T-W-S-X heterotetramer), involved in the formation of a functional kinetochore outer plate, which is essential for kinetochore-microtubule attachment and faithful mitotic progression. As a component of MHF and CENP-T-W-S-X complexes, binds DNA and bends it to form a nucleosome-like structure. DNA-binding function is fulfilled in the presence of CENPS, with the following preference for DNA substates: Holliday junction &gt; double-stranded &gt; splay arm &gt; single-stranded. Does not bind DNA on its own. The protein is Centromere protein X (CENPX) of Homo sapiens (Human).